A 123-amino-acid polypeptide reads, in one-letter code: S-adenosylmethionine decarboxylase proenzyme 2 (123 aa).

The active-site Schiff-base intermediate with substrate; via pyruvic acid is the Ser65. Position 65 is a pyruvic acid (Ser); by autocatalysis (Ser65). His70 serves as the catalytic Proton acceptor; for processing activity. The Proton donor; for catalytic activity role is filled by Cys85.

It belongs to the prokaryotic AdoMetDC family. Type 1 subfamily. As to quaternary structure, heterotetramer of two alpha and two beta chains arranged as a dimer of alpha/beta heterodimers. The cofactor is pyruvate. In terms of processing, is synthesized initially as an inactive proenzyme. Formation of the active enzyme involves a self-maturation process in which the active site pyruvoyl group is generated from an internal serine residue via an autocatalytic post-translational modification. Two non-identical subunits are generated from the proenzyme in this reaction, and the pyruvate is formed at the N-terminus of the alpha chain, which is derived from the carboxyl end of the proenzyme. The post-translation cleavage follows an unusual pathway, termed non-hydrolytic serinolysis, in which the side chain hydroxyl group of the serine supplies its oxygen atom to form the C-terminus of the beta chain, while the remainder of the serine residue undergoes an oxidative deamination to produce ammonia and the pyruvoyl group blocking the N-terminus of the alpha chain.

The enzyme catalyses S-adenosyl-L-methionine + H(+) = S-adenosyl 3-(methylsulfanyl)propylamine + CO2. It participates in amine and polyamine biosynthesis; S-adenosylmethioninamine biosynthesis; S-adenosylmethioninamine from S-adenosyl-L-methionine: step 1/1. In terms of biological role, catalyzes the decarboxylation of S-adenosylmethionine to S-adenosylmethioninamine (dcAdoMet), the propylamine donor required for the synthesis of the polyamines spermine and spermidine from the diamine putrescine. The sequence is that of S-adenosylmethionine decarboxylase proenzyme 2 from Bacillus anthracis.